The following is a 1124-amino-acid chain: Anillin (1124 aa).

Position 1 is an N-acetylmethionine (Met1). Basic and acidic residues predominate over residues 1–25 (MDPFTEKLLERTRARRENLQRKMAE). The segment at 1–45 (MDPFTEKLLERTRARRENLQRKMAERPTAAPRSMTHAKRARQPLS) is required for ubiquitination. Disordered regions lie at residues 1 to 113 (MDPF…ADTI) and 136 to 196 (ATAA…ATPV). Residues 1-155 (MDPFTEKLLE…MQKLAEQRRR (155 aa)) are interaction with CD2AP. A nuclear localization region spans residues 1–230 (MDPFTEKLLE…AKQNSVQEQP (230 aa)). Phosphoserine occurs at positions 54 and 72. The span at 77-96 (VEVSNLENKQPVESTSAKSC) shows a compositional bias: polar residues. 2 positions are modified to phosphoserine: Ser97 and Ser102. Low complexity predominate over residues 97–108 (SPSPVSPQVQPQ). A compositionally biased stretch (basic and acidic residues) spans 148 to 158 (KLAEQRRRWDN). Residues Ser172 and Ser182 each carry the phosphoserine modification. Thr194 carries the post-translational modification Phosphothreonine. 2 positions are modified to phosphoserine: Ser225 and Ser252. An interaction with F-actin region spans residues 231–676 (GTACLSKFSS…RDLLYSIDAY (446 aa)). Residue Lys254 forms a Glycyl lysine isopeptide (Lys-Gly) (interchain with G-Cter in SUMO1) linkage. At Ser261 the chain carries Phosphoserine. The segment covering 294–305 (TSPVKSTTSITD) has biased composition (polar residues). Residues 294 to 328 (TSPVKSTTSITDAKSCEGQNPELLPKTPISPLKTG) form a disordered region. Thr320 is subject to Phosphothreonine. Phosphoserine is present on residues Ser323 and Ser339. A Phosphothreonine modification is found at Thr364. Lys371 is subject to N6-acetyllysine. Basic and acidic residues predominate over residues 380–389 (RCQEHSKESP). The disordered stretch occupies residues 380-399 (RCQEHSKESPARSTPHRTPI). Residues Thr397 and Thr401 each carry the phosphothreonine modification. Phosphoserine is present on residues Ser417, Ser419, Ser449, Ser485, Ser518, Ser553, and Ser561. Residues 569-604 (FSDVLEEGELDMEKSQEEMDQALAESSEEQEDALNI) adopt a coiled-coil conformation. Disordered regions lie at residues 579 to 600 (DMEK…EQED) and 625 to 664 (LVST…SLGS). 2 stretches are compositionally biased toward basic and acidic residues: residues 631 to 644 (LELK…ESPK) and 654 to 664 (PRAESGDSLGS). A phosphoserine mark is found at Ser637, Ser642, Ser658, Ser661, and Ser664. Residue Tyr671 is modified to Phosphotyrosine. A phosphoserine mark is found at Ser678, Ser688, Ser792, and Ser927. A localization to the cleavage furrow region spans residues 730–1124 (QQTVIYQASQ…DACYKPIGKP (395 aa)). In terms of domain architecture, PH spans 983–1107 (SVEERGFLTI…WMQKLNQVLV (125 aa)).

Interacts with F-actin. Interacts with CD2AP. May interact with RHOA. Interacts with FZR1/CDH1 during mitotic exit. Post-translationally, phosphorylated during mitosis. In terms of processing, ubiquitinated, and this requires FZR1/CDH1. In terms of tissue distribution, ubiquitously expressed. Present at highest levels in the brain, at high levels in the placenta and testis, at intermediate levels in the intestine, ovary, skeletal muscle and thymus and at lower levels in heart, kidney, liver, lung, pancreas, prostate and spleen. In the kidney, it is widely expressed in tubules, but sparsely expressed in the glomerulus. Expression is significantly increased in renal biopsy specimens from idiopathic FSGS. Overexpressed in many tumor types including breast, colorectal, endometrial, hepatic, kidney, lung, ovarian and pancreatic tumors.

Its subcellular location is the nucleus. The protein resides in the cytoplasm. The protein localises to the cytoskeleton. It localises to the cell cortex. It is found in the cell projection. Its subcellular location is the bleb. Functionally, required for cytokinesis. Essential for the structural integrity of the cleavage furrow and for completion of cleavage furrow ingression. Plays a role in bleb assembly during metaphase and anaphase of mitosis. May play a significant role in podocyte cell migration. This Homo sapiens (Human) protein is Anillin (ANLN).